Consider the following 601-residue polypeptide: NADH-ubiquinone oxidoreductase chain 5 (601 aa).

Helical transmembrane passes span 5-25, 37-54, 83-105, 112-129, 134-156, 169-189, 209-231, 240-260, 271-291, 300-320, 323-343, 363-383, 400-420, 451-471, 478-498, 508-528, and 581-601; these read ITSL…TLSF, YMRN…IYID, YCLT…SLWY, TLFF…LFFL, LLQL…NWWH, IIYN…SALF, WLPL…LHPW, TPVS…FLLI, MIIS…ALCA, IIAF…GINQ, LAFL…LCSA, LILP…MGMP, MSYV…LTSI, PLIR…TFFL, FSIP…VSSL, FSHM…AIFH, and NYIT…ALYF.

This sequence belongs to the complex I subunit 5 family.

It localises to the mitochondrion inner membrane. It carries out the reaction a ubiquinone + NADH + 5 H(+)(in) = a ubiquinol + NAD(+) + 4 H(+)(out). Core subunit of the mitochondrial membrane respiratory chain NADH dehydrogenase (Complex I) that is believed to belong to the minimal assembly required for catalysis. Complex I functions in the transfer of electrons from NADH to the respiratory chain. The immediate electron acceptor for the enzyme is believed to be ubiquinone. In Myxine glutinosa (Atlantic hagfish), this protein is NADH-ubiquinone oxidoreductase chain 5 (MT-ND5).